The primary structure comprises 449 residues: MKPEFLESAEFYNRRYHNFSSSVIVPMALLLVFLLGFATVAEKEMSLSTRATVEPSRILANIQSTSNNRILVNHLEENKLVKKGDLLVQYQEGAEGVQAESYASQLDMLKDQKKQLEYLQKSLQEGENHFPEEDKFGYQATFRDYISQAGSLRASTSQQNETIASQNAAASQTQAEIGNLISQTEAKIRDYQTAKSAIETGTSLAGQNLAYSLYQSYKSQGEENPQTKVQAVAQVEAQISQLESSLATYRVQYAGSGTQQAYASGLSSQLESLKSQHLAKVGQELSLLAQKILEAESGKKVQGNLLDKGKITASEDGVLHLNPETSDSSMVAEGTLLAQLYPSLEREGKAKLTAYLSSKDVARIKVGDSVRYTTTHDAGNQLFLDSTITSIDATATKTEKGNFFKIEAETNLTSEQAEKLRYGVEGRLQMITGKKSYLRYYLDQFLNKE.

At 1 to 20 (MKPEFLESAEFYNRRYHNFS) the chain is on the cytoplasmic side. Residues 21–41 (SSVIVPMALLLVFLLGFATVA) traverse the membrane as a helical segment. Residues 42-449 (EKEMSLSTRA…YYLDQFLNKE (408 aa)) are Extracellular-facing.

It belongs to the membrane fusion protein (MFP) (TC 8.A.1) family.

It is found in the cell membrane. Its function is as follows. Required for induction of competence. This chain is Transport protein ComB (comB), found in Streptococcus pneumoniae (strain ATCC BAA-255 / R6).